The chain runs to 379 residues: MMKPERKTHPLLMIINNSLIDLPTPSNISYLWNYGSLLGITLVFQIMTGIMLAMHYSDNMDLAFSSMIHISRDVNYGWMIRFFHGNGASFFFICLYVHIGRSIYYNSYKLNYTWNIGIIILLLTMATAFLGYVLPWGQMSFWGATVITNLLSAIPYIGMTIVNWLWGGFAVSNATLTRFFSLHFLLPFIISAMVMIHLLFLHQTGSNNPLGLNSNTDKIPFHQYFSIKDLITMMLFIMILSFLVLFSPNILGDPENYIPANPLVTPIHIQPEWYFLFAYAILRSIPNKLGGVIALLMSIMILFFLPIFSKNCFSTSFNKWSGMIFWSFINIIILLTWIGANPVEAPYIIFGQILSVLYFLTFFWMPYSMVLFQKIIELL.

4 helical membrane-spanning segments follow: residues 34 to 54, 78 to 100, 113 to 133, and 179 to 199; these read YGSL…MLAM, WMIR…VHIG, TWNI…LGYV, and FFSL…IHLL. Residues His84 and His98 each coordinate heme b. Residues His183 and His197 each coordinate heme b. Residue His202 coordinates a ubiquinone. 4 helical membrane passes run 225–245, 289–309, 320–340, and 345–365; these read FSIK…FLVL, LGGV…PIFS, WSGM…WIGA, and APYI…FFWM.

The protein belongs to the cytochrome b family. As to quaternary structure, the main subunits of complex b-c1 are: cytochrome b, cytochrome c1 and the Rieske protein. Heme b serves as cofactor.

Its subcellular location is the mitochondrion inner membrane. In terms of biological role, component of the ubiquinol-cytochrome c reductase complex (complex III or cytochrome b-c1 complex) that is part of the mitochondrial respiratory chain. The b-c1 complex mediates electron transfer from ubiquinol to cytochrome c. Contributes to the generation of a proton gradient across the mitochondrial membrane that is then used for ATP synthesis. In Epiperipatus biolleyi (Velvet worm), this protein is Cytochrome b (mt:Cyt-b).